Here is a 1248-residue protein sequence, read N- to C-terminus: Bifunctional autolysin (1248 aa).

The first 29 residues, 1–29, serve as a signal peptide directing secretion; it reads MAKKFNYKLPSMVALTLVGSAVTAHQVQA. Positions 103-134 are disordered; it reads GDTRANQSATTNNTQPVAKSTSTTAPKTNTNV. The tract at residues 191–767 is N-acetylmuramoyl-L-alanine amidase; that stretch reads ASAQPRSVAA…AVAQPKTAVK (577 aa). GW domains are found at residues 435–509, 511–585, 604–678, 680–754, 776–851, 853–928, and 935–1009; these read TVAA…YNTA, SPVN…DTAK, TVSS…YNNA, SPVN…VPAA, TTQT…VQNL, KEVK…APTA, and AAKD…KELI. Positions 768 to 1248 are endo-beta-N-acetylglucosaminidase; sequence AYTVTKPQTT…GKYFDIPQYK (481 aa).

This sequence in the N-terminal section; belongs to the N-acetylmuramoyl-L-alanine amidase 2 family. In the C-terminal section; belongs to the glycosyl hydrolase 73 family. In terms of assembly, oligomer; forms a ring structure at the cell surface which is important for efficient partitioning of daughter cells after cell division. Post-translationally, undergoes proteolytic processing to generate the two extracellular lytic enzymes, probably at the septal region on the cell surface.

The protein resides in the secreted. The catalysed reaction is Hydrolyzes the link between N-acetylmuramoyl residues and L-amino acid residues in certain cell-wall glycopeptides.. The enzyme catalyses an N(4)-(oligosaccharide-(1-&gt;3)-[oligosaccharide-(1-&gt;6)]-beta-D-Man-(1-&gt;4)-beta-D-GlcNAc-(1-&gt;4)-alpha-D-GlcNAc)-L-asparaginyl-[protein] + H2O = an oligosaccharide-(1-&gt;3)-[oligosaccharide-(1-&gt;6)]-beta-D-Man-(1-&gt;4)-D-GlcNAc + N(4)-(N-acetyl-beta-D-glucosaminyl)-L-asparaginyl-[protein]. In terms of biological role, endohydrolysis of the di-N-acetylchitobiosyl unit in high-mannose glycopeptides and glycoproteins containing the -[(Man)5(GlcNAc)2]-Asn structure. One N-acetyl-D-glucosamine residue remains attached to the protein; the rest of the oligosaccharide is released intact. Cleaves the peptidoglycan connecting the daughter cells at the end of the cell division cycle, resulting in the separation of the two newly divided cells. Acts as an autolysin in penicillin-induced lysis. The chain is Bifunctional autolysin (atl) from Staphylococcus aureus (strain Mu50 / ATCC 700699).